We begin with the raw amino-acid sequence, 669 residues long: RNA-binding protein 14 (669 aa).

RRM domains follow at residues 1-73 and 79-149; these read MKIF…MSRP and WKIF…LSTK. Residues K126, K135, K138, K149, and K153 each participate in a glycyl lysine isopeptide (Lys-Gly) (interchain with G-Cter in SUMO2) cross-link. 2 disordered regions span residues 147 to 175 and 193 to 232; these read STKG…DTAF and NSTG…PLTA. Phosphoserine is present on S161. Residue K164 is modified to N6-acetyllysine; alternate. A Glycyl lysine isopeptide (Lys-Gly) (interchain with G-Cter in SUMO2); alternate cross-link involves residue K164. At T206 the chain carries Phosphothreonine. Residues S220, S242, S244, S256, S272, and S280 each carry the phosphoserine modification. The tract at residues 284–303 is disordered; sequence PYRGQLASPSSQSAAASSLG. The span at 287–303 shows a compositional bias: low complexity; it reads GQLASPSSQSAAASSLG. Positions 307 to 354 are TRBP-interacting domain; interaction with STIL; that stretch reads GAQPSASALSSYGGQAAAASSLNSYGAQGSSLASYGNQPSSYGAQAAS. Phosphoserine occurs at positions 520, 523, 527, and 562. The disordered stretch occupies residues 566 to 590; the sequence is VANANSTPPPYERTRLSPPRASYDD. Position 572 is a phosphothreonine (T572). The residue at position 582 (S582) is a Phosphoserine. K600 is covalently cross-linked (Glycyl lysine isopeptide (Lys-Gly) (interchain with G-Cter in SUMO2)). S618, S620, S623, S627, S643, and S649 each carry phosphoserine.

In terms of assembly, isoform 1: Interacts with NCOA6, CITED1 and XRCC5/KU86. Isoform 1: Interacts with SS18 isoform 1. Isoform 1: Interacts with SS18 isoform 2. Interacts with STIL and interferes with its interaction with CPAP. Interacts with gamma-tubulin. Part of the HDP-RNP complex composed of at least HEXIM1, PRKDC, XRCC5, XRCC6, paraspeckle proteins (SFPQ, NONO, PSPC1, RBM14, and MATR3) and NEAT1 RNA. Interacts with RBPMS; the interaction allows cooperative assembly of RNA-bound stable cell-specific alternative splicing regulatory complexes. As to expression, expressed in all tissues tested, including brain, heart, skeletal muscle, colon, thymus, spleen, kidney, liver, small intestine, placenta, lung and peripheral blood lymphocytes.

It is found in the nucleus. It localises to the nucleolus. Its subcellular location is the cytoplasm. Isoform 1 may function as a nuclear receptor coactivator, enhancing transcription through other coactivators such as NCOA6 and CITED1. Isoform 2, functions as a transcriptional repressor, modulating transcriptional activities of coactivators including isoform 1, NCOA6 and CITED1. Regulates centriole biogenesis by suppressing the formation of aberrant centriolar protein complexes in the cytoplasm and thus preserving mitotic spindle integrity. Prevents the formation of the STIL-CPAP complex (which can induce the formation of aberrant centriolar protein complexes) by interfering with the interaction of STIL with CPAP. Plays a role in the regulation of DNA virus-mediated innate immune response by assembling into the HDP-RNP complex, a complex that serves as a platform for IRF3 phosphorylation and subsequent innate immune response activation through the cGAS-STING pathway. Also involved in the regulation of pre-mRNA alternative splicing. The sequence is that of RNA-binding protein 14 (RBM14) from Homo sapiens (Human).